We begin with the raw amino-acid sequence, 185 residues long: Ribosome-recycling factor (185 aa).

Belongs to the RRF family.

It is found in the cytoplasm. In terms of biological role, responsible for the release of ribosomes from messenger RNA at the termination of protein biosynthesis. May increase the efficiency of translation by recycling ribosomes from one round of translation to another. The polypeptide is Ribosome-recycling factor (Mycobacterium bovis (strain BCG / Pasteur 1173P2)).